The following is a 274-amino-acid chain: 2,3,4,5-tetrahydropyridine-2,6-dicarboxylate N-succinyltransferase (274 aa).

2 residues coordinate substrate: R104 and D141.

Belongs to the transferase hexapeptide repeat family. In terms of assembly, homotrimer.

Its subcellular location is the cytoplasm. The enzyme catalyses (S)-2,3,4,5-tetrahydrodipicolinate + succinyl-CoA + H2O = (S)-2-succinylamino-6-oxoheptanedioate + CoA. The protein operates within amino-acid biosynthesis; L-lysine biosynthesis via DAP pathway; LL-2,6-diaminopimelate from (S)-tetrahydrodipicolinate (succinylase route): step 1/3. The chain is 2,3,4,5-tetrahydropyridine-2,6-dicarboxylate N-succinyltransferase from Buchnera aphidicola subsp. Baizongia pistaciae (strain Bp).